A 314-amino-acid polypeptide reads, in one-letter code: tRNA dimethylallyltransferase (314 aa).

Residues 1-25 are disordered; it reads MAEEPQRSPAPTSPFAFTVPSNSLS. Residue 40-47 coordinates ATP; sequence GPTASGKS. 42-47 contributes to the substrate binding site; the sequence is TASGKS.

It belongs to the IPP transferase family. In terms of assembly, monomer. It depends on Mg(2+) as a cofactor.

It catalyses the reaction adenosine(37) in tRNA + dimethylallyl diphosphate = N(6)-dimethylallyladenosine(37) in tRNA + diphosphate. Its function is as follows. Catalyzes the transfer of a dimethylallyl group onto the adenine at position 37 in tRNAs that read codons beginning with uridine, leading to the formation of N6-(dimethylallyl)adenosine (i(6)A). The sequence is that of tRNA dimethylallyltransferase from Cereibacter sphaeroides (strain ATCC 17023 / DSM 158 / JCM 6121 / CCUG 31486 / LMG 2827 / NBRC 12203 / NCIMB 8253 / ATH 2.4.1.) (Rhodobacter sphaeroides).